A 342-amino-acid chain; its full sequence is Ferrochelatase (342 aa).

Residues histidine 188 and glutamate 268 each contribute to the Fe cation site.

This sequence belongs to the ferrochelatase family.

The protein resides in the cytoplasm. It catalyses the reaction heme b + 2 H(+) = protoporphyrin IX + Fe(2+). Its pathway is porphyrin-containing compound metabolism; protoheme biosynthesis; protoheme from protoporphyrin-IX: step 1/1. In terms of biological role, catalyzes the ferrous insertion into protoporphyrin IX. This chain is Ferrochelatase, found in Rickettsia prowazekii (strain Madrid E).